Reading from the N-terminus, the 116-residue chain is Guanylin (116 aa).

The N-terminal stretch at 1-23 is a signal peptide; that stretch reads MNACVLSVLCLLGALAVLVEGVT. A propeptide spanning residues 24-101 is cleaved from the precursor; sequence VQDGDLSFPL…LQRLEAIAQD (78 aa). 3 disulfide bridges follow: cysteine 69–cysteine 83, cysteine 105–cysteine 113, and cysteine 108–cysteine 116.

It belongs to the guanylin family. As to expression, localized in both crypts and villi in the small intestine and to superficial epithelial cells in the colon.

Its subcellular location is the secreted. Endogenous activator of intestinal guanylate cyclase. It stimulates this enzyme through the same receptor binding region as the heat-stable enterotoxins. The chain is Guanylin (Guca2a) from Mus musculus (Mouse).